A 248-amino-acid polypeptide reads, in one-letter code: Probable transcriptional regulatory protein RPE_4771 (248 aa).

Residues 1–21 (MAGHSQFKNIMHRKGRQDAQK) are disordered.

Belongs to the TACO1 family.

It localises to the cytoplasm. The protein is Probable transcriptional regulatory protein RPE_4771 of Rhodopseudomonas palustris (strain BisA53).